The sequence spans 363 residues: Putative glutamate--cysteine ligase 2-3 (363 aa).

It belongs to the glutamate--cysteine ligase type 2 family. YbdK subfamily.

It carries out the reaction L-cysteine + L-glutamate + ATP = gamma-L-glutamyl-L-cysteine + ADP + phosphate + H(+). In terms of biological role, ATP-dependent carboxylate-amine ligase which exhibits weak glutamate--cysteine ligase activity. This chain is Putative glutamate--cysteine ligase 2-3, found in Rubrobacter xylanophilus (strain DSM 9941 / JCM 11954 / NBRC 16129 / PRD-1).